The sequence spans 342 residues: Tetraacyldisaccharide 4'-kinase (342 aa).

T68–T75 lines the ATP pocket.

Belongs to the LpxK family.

The catalysed reaction is a lipid A disaccharide + ATP = a lipid IVA + ADP + H(+). It participates in glycolipid biosynthesis; lipid IV(A) biosynthesis; lipid IV(A) from (3R)-3-hydroxytetradecanoyl-[acyl-carrier-protein] and UDP-N-acetyl-alpha-D-glucosamine: step 6/6. In terms of biological role, transfers the gamma-phosphate of ATP to the 4'-position of a tetraacyldisaccharide 1-phosphate intermediate (termed DS-1-P) to form tetraacyldisaccharide 1,4'-bis-phosphate (lipid IVA). This Burkholderia lata (strain ATCC 17760 / DSM 23089 / LMG 22485 / NCIMB 9086 / R18194 / 383) protein is Tetraacyldisaccharide 4'-kinase.